The primary structure comprises 249 residues: Octanoyltransferase (249 aa).

In terms of domain architecture, BPL/LPL catalytic spans 53 to 234; sequence PDTDDEIWVV…RLIAHLDGAT (182 aa). Residues 93–100, 165–167, and 178–180 each bind substrate; these read RGGQITYH, ALG, and GLS. Residue Cys-196 is the Acyl-thioester intermediate of the active site.

The protein belongs to the LipB family.

It is found in the cytoplasm. It catalyses the reaction octanoyl-[ACP] + L-lysyl-[protein] = N(6)-octanoyl-L-lysyl-[protein] + holo-[ACP] + H(+). It participates in protein modification; protein lipoylation via endogenous pathway; protein N(6)-(lipoyl)lysine from octanoyl-[acyl-carrier-protein]: step 1/2. In terms of biological role, catalyzes the transfer of endogenously produced octanoic acid from octanoyl-acyl-carrier-protein onto the lipoyl domains of lipoate-dependent enzymes. Lipoyl-ACP can also act as a substrate although octanoyl-ACP is likely to be the physiological substrate. This chain is Octanoyltransferase, found in Burkholderia mallei (strain NCTC 10247).